The sequence spans 232 residues: Large ribosomal subunit protein uL1 (232 aa).

The protein belongs to the universal ribosomal protein uL1 family. In terms of assembly, part of the 50S ribosomal subunit.

Binds directly to 23S rRNA. The L1 stalk is quite mobile in the ribosome, and is involved in E site tRNA release. In terms of biological role, protein L1 is also a translational repressor protein, it controls the translation of the L11 operon by binding to its mRNA. This chain is Large ribosomal subunit protein uL1, found in Sinorhizobium fredii (strain NBRC 101917 / NGR234).